A 231-amino-acid polypeptide reads, in one-letter code: Small ribosomal subunit protein uS3 (231 aa).

The 69-residue stretch at 39–107 (IRELLHKELK…DVVINIVEIR (69 aa)) folds into the KH type-2 domain.

Belongs to the universal ribosomal protein uS3 family. In terms of assembly, part of the 30S ribosomal subunit. Forms a tight complex with proteins S10 and S14.

Its function is as follows. Binds the lower part of the 30S subunit head. Binds mRNA in the 70S ribosome, positioning it for translation. In Nitrobacter hamburgensis (strain DSM 10229 / NCIMB 13809 / X14), this protein is Small ribosomal subunit protein uS3.